Consider the following 579-residue polypeptide: Viral transcription factor IE2 (579 aa).

Residues Met1–Pro11 show a composition bias toward basic and acidic residues. 2 disordered regions span residues Met1–Thr30 and Asp99–Lys161. Positions Asp99–Pro133 are enriched in polar residues. Glycyl lysine isopeptide (Lys-Gly) (interchain with G-Cter in SUMO) cross-links involve residues Lys175 and Lys180. The SUMO-interacting motif 1/SIM1 motif lies at Cys199–Ile202. The non-covalent SUMO1 binding region (SIM) stretch occupies residues Ile200–Glu208. A phosphoserine mark is found at Ser203 and Ser205. The tract at residues Glu206–Glu335 is disordered. 3 stretches are compositionally biased toward low complexity: residues Arg216 to Thr236, Ser259 to Asp270, and Ala301 to Gly316. An SUMO-interacting motif 1/SIM2 motif is present at residues Ile409–Ile412. The short motif at Val500–Leu503 is the SUMO-interacting motif 1/SIM3 element.

This sequence belongs to the HHV-5 IE2 protein family. Interacts with host SUMO-modified form of TATA-binding protein (TBP)-associated factor 12/TAF12 in a SIM-dependent manner; this interaction increases the transactivation activity of IE2. Interacts with host CHAF1A. Interacts with several components of the host transcriptional machinery including TBP, TF2B and CREB1. Interacts with host DNA replication licensing factor MCM3. Interacts with host PLSCR1; this interaction inhibits IE2 transactivating activity. Phosphorylated by host CK2 at Ser-203 and Ser-205; leading to enhanced SUMOylation. Post-translationally, SUMOylated; SUMOylation is enhanced when IE2 is phosphorylated by host CK2. The sumoylation is necessary for efficient replication of the virus and thus for the function of this viral transcription factor.

Its subcellular location is the host nucleus. Stimulates viral early and late gene expression and thus play a crucial role in the regulation of productive infection. Selectively drives host RNA Pol II transcription initiation at a subset of viral early-late and late promoters without substantially affecting Pol II transcription of expressed host genes. Mechanistically, forms a repressive complex at the major immediate-early promoter region involving direct association with host nucleosomes and TBP. Concerning activation, stimulates transcription by binding nearby, but not within, core promoter regions. In addition, activates quiescent cells to reenter the cell cycle and up-regulates several E2F-responsive genes, which are responsible for pushing the cell into S phase. In S-phase, inhibits cellular DNA synthesis and blocks further cell cycle progression. This chain is Viral transcription factor IE2 (UL122), found in Homo sapiens (Human).